The primary structure comprises 59 residues: Conotoxin Ts-03 (59 aa).

An N-terminal signal peptide occupies residues 1 to 19 (MRCLPVFIILLLLIPSAAS). Residues 20 to 47 (VAQPKTKDDVALASFYDNAKRTLQRHWA) constitute a propeptide that is removed on maturation.

It belongs to the conotoxin T superfamily. In terms of processing, contains 2 disulfide bonds that can be either 'C1-C3, C2-C4' or 'C1-C4, C2-C3', since these disulfide connectivities have been observed for conotoxins with cysteine framework V (for examples, see AC P0DQQ7 and AC P81755). In terms of tissue distribution, expressed by the venom duct.

It localises to the secreted. The chain is Conotoxin Ts-03 from Conus tessulatus (Tessellate cone).